Reading from the N-terminus, the 311-residue chain is tRNA-cytidine(32) 2-sulfurtransferase (311 aa).

A PP-loop motif motif is present at residues 47 to 52 (SGGKDS). The [4Fe-4S] cluster site is built by Cys122, Cys125, and Cys213.

This sequence belongs to the TtcA family. In terms of assembly, homodimer. It depends on Mg(2+) as a cofactor. The cofactor is [4Fe-4S] cluster.

The protein localises to the cytoplasm. It carries out the reaction cytidine(32) in tRNA + S-sulfanyl-L-cysteinyl-[cysteine desulfurase] + AH2 + ATP = 2-thiocytidine(32) in tRNA + L-cysteinyl-[cysteine desulfurase] + A + AMP + diphosphate + H(+). Its pathway is tRNA modification. Functionally, catalyzes the ATP-dependent 2-thiolation of cytidine in position 32 of tRNA, to form 2-thiocytidine (s(2)C32). The sulfur atoms are provided by the cysteine/cysteine desulfurase (IscS) system. The sequence is that of tRNA-cytidine(32) 2-sulfurtransferase from Escherichia coli (strain 55989 / EAEC).